The chain runs to 372 residues: Queuine tRNA-ribosyltransferase (372 aa).

The active-site Proton acceptor is Asp-89. Substrate contacts are provided by residues 89–93 (DSGGF), Asp-161, and Gly-232. The tract at residues 262 to 268 (GIGDLPS) is RNA binding. Asp-281 functions as the Nucleophile in the catalytic mechanism. An RNA binding; important for wobble base 34 recognition region spans residues 286–290 (TKAAR). Residues Cys-319, Cys-321, Cys-324, and His-351 each coordinate Zn(2+).

It belongs to the queuine tRNA-ribosyltransferase family. As to quaternary structure, homodimer. Within each dimer, one monomer is responsible for RNA recognition and catalysis, while the other monomer binds to the replacement base PreQ1. It depends on Zn(2+) as a cofactor.

The enzyme catalyses 7-aminomethyl-7-carbaguanine + guanosine(34) in tRNA = 7-aminomethyl-7-carbaguanosine(34) in tRNA + guanine. It functions in the pathway tRNA modification; tRNA-queuosine biosynthesis. In terms of biological role, catalyzes the base-exchange of a guanine (G) residue with the queuine precursor 7-aminomethyl-7-deazaguanine (PreQ1) at position 34 (anticodon wobble position) in tRNAs with GU(N) anticodons (tRNA-Asp, -Asn, -His and -Tyr). Catalysis occurs through a double-displacement mechanism. The nucleophile active site attacks the C1' of nucleotide 34 to detach the guanine base from the RNA, forming a covalent enzyme-RNA intermediate. The proton acceptor active site deprotonates the incoming PreQ1, allowing a nucleophilic attack on the C1' of the ribose to form the product. After dissociation, two additional enzymatic reactions on the tRNA convert PreQ1 to queuine (Q), resulting in the hypermodified nucleoside queuosine (7-(((4,5-cis-dihydroxy-2-cyclopenten-1-yl)amino)methyl)-7-deazaguanosine). This Chlamydia trachomatis serovar A (strain ATCC VR-571B / DSM 19440 / HAR-13) protein is Queuine tRNA-ribosyltransferase.